A 247-amino-acid polypeptide reads, in one-letter code: Zinc finger protein YPR015C (247 aa).

2 C2H2-type zinc fingers span residues 185–207 (KQCP…YLIH) and 213–237 (FKCT…LRTH).

This is Zinc finger protein YPR015C from Saccharomyces cerevisiae (strain ATCC 204508 / S288c) (Baker's yeast).